We begin with the raw amino-acid sequence, 216 residues long: Purine nucleoside phosphorylase DeoD-type (216 aa).

Phosphate contacts are provided by residues Arg-4, Arg-23, and 67–70 (RVGT). A purine D-ribonucleoside-binding positions include 159 to 161 (EME) and 183 to 184 (SD). The active-site Proton donor is Asp-184.

Belongs to the PNP/UDP phosphorylase family. As to quaternary structure, homohexamer; trimer of homodimers.

The catalysed reaction is a purine D-ribonucleoside + phosphate = a purine nucleobase + alpha-D-ribose 1-phosphate. It catalyses the reaction a purine 2'-deoxy-D-ribonucleoside + phosphate = a purine nucleobase + 2-deoxy-alpha-D-ribose 1-phosphate. Catalyzes the reversible phosphorolytic breakdown of the N-glycosidic bond in the beta-(deoxy)ribonucleoside molecules, with the formation of the corresponding free purine bases and pentose-1-phosphate. The protein is Purine nucleoside phosphorylase DeoD-type of Streptococcus thermophilus.